The primary structure comprises 332 residues: Nuclear hormone receptor family member nhr-9 (332 aa).

The segment at residues 11-85 is a DNA-binding region (nuclear receptor); the sequence is ERRCAICSKL…MGMRIVTNQY (75 aa). 2 consecutive NR C4-type zinc fingers follow at residues 14–34 and 50–73; these read CAICSKLGNSYNYGVLSCNAC and CINNDNCDTSNLILTCRQCRYNKC. Positions 101-332 constitute an NR LBD domain; sequence DRSNKLMNFQ…KRLCAELLGA (232 aa).

Belongs to the nuclear hormone receptor family.

The protein localises to the nucleus. Its function is as follows. Orphan nuclear receptor. The sequence is that of Nuclear hormone receptor family member nhr-9 (nhr-9) from Caenorhabditis elegans.